The chain runs to 319 residues: Ornithine carbamoyltransferase (319 aa).

Residues 55 to 58 (STRT), glutamine 82, arginine 106, and 133 to 136 (HPCQ) contribute to the carbamoyl phosphate site. L-ornithine-binding positions include asparagine 171, aspartate 234, and 238–239 (SM). Carbamoyl phosphate-binding positions include 274–275 (CL) and arginine 302.

This sequence belongs to the aspartate/ornithine carbamoyltransferase superfamily. OTCase family.

The protein resides in the cytoplasm. It catalyses the reaction carbamoyl phosphate + L-ornithine = L-citrulline + phosphate + H(+). It functions in the pathway amino-acid biosynthesis; L-arginine biosynthesis; L-arginine from L-ornithine and carbamoyl phosphate: step 1/3. In terms of biological role, reversibly catalyzes the transfer of the carbamoyl group from carbamoyl phosphate (CP) to the N(epsilon) atom of ornithine (ORN) to produce L-citrulline. This is Ornithine carbamoyltransferase from Corynebacterium diphtheriae (strain ATCC 700971 / NCTC 13129 / Biotype gravis).